Reading from the N-terminus, the 195-residue chain is MGRARDAILDALENLTAEELKKFKLKLLSVPLREGYGRIPRGALLSMDALDLTDKLVSFYLETYGAELTANVLRDMGLQEMAGQLQAATHQGSGAAPAGIQAPPQSAAKPGLHFIDQHRAALIARVTNVEWLLDALYGKVLTDEQYQAVRAEPTNPSKMRKLFSFTPAWNWTCKDLLLQALRESQSYLVEDLERS.

The 91-residue stretch at 1–91 (MGRARDAILD…AGQLQAATHQ (91 aa)) folds into the Pyrin domain. Residues lysine 55 and lysine 174 each participate in a glycyl lysine isopeptide (Lys-Gly) (interchain with G-Cter in ubiquitin) cross-link. In terms of domain architecture, CARD spans 107 to 195 (AAKPGLHFID…SYLVEDLERS (89 aa)). At serine 195 the chain carries Phosphoserine.

Self-associates; enforced oligomerization induces apoptosis, NF-kappa-B regulation and interleukin-1 beta secretion. Homooligomers can form disk-like particles of approximately 12 nm diameter and approximately 1 nm height. Next to isoform 1, also isoform 2 and isoform 3 may be involved in oligomerization leading to functional regulation. Component of several inflammasomes containing one pattern recognition receptor/sensor, such as NLRP1, NLRP2, NLRP3, NLRP6, NLRC4, AIM2, MEFV or NOD2, and probably NLRC4, NLRP12 or IFI16. Major component of the ASC pyroptosome, a 1-2 um supramolecular assembly (one per macrophage cell) which consists of oligomerized PYCARD dimers and CASP1. Interacts with CASP1 (precursor form); the interaction induces activation of CASP1 leading to the processing of interleukin-1 beta; PYCARD competes with RIPK2 for binding to CASP1. Interacts with NLRP3; the interaction requires the homooligomerization of NLRP3. Interacts with NLRP2, NLRC4, MEFV, CARD16, AIM2, IFI16, NOD2, RIGI, RIPK2, PYDC1, PYDC2, NLRP10, CASP8, CHUK, IKBKB and BAX. Component of the AIM2 PANoptosome complex, a multiprotein complex that drives inflammatory cell death (PANoptosis). Phosphorylated. Post-translationally, 'Lys-63'-linked polyubiquitination by TRAF3 is critical for speck formation and inflammasome activation. 'Lys-63'-linked deubiquitinated by USP50; a crucial step for NLRP3-mediated inflammasome activation. 'Lys-63'-linked polyubiquitination by PELI1 is also critical for speck formation and inflammasome activation. Deubiquitinated by USP3 that cleaves 'Lys-48'-linked ubiquitin chains and strengthens its stability by blocking proteasomal degradation. Widely expressed at low levels. Detected in peripheral blood leukocytes, lung, small intestine, spleen, thymus, colon and at lower levels in placenta, liver and kidney. Very low expression in skeletal muscle, heart and brain. Expressed in lung epithelial cells (at protein level). Detected in the leukemia cell lines HL-60 and U-937, but not in Jurkat T-cell lymphoma and Daudi Burkitt's lymphoma. Detected in the melanoma cell line WM35, but not in WM793. Not detected in HeLa cervical carcinoma cells and MOLT-4 lymphocytic leukemia cells.

The protein localises to the cytoplasm. It is found in the inflammasome. The protein resides in the endoplasmic reticulum. Its subcellular location is the mitochondrion. It localises to the nucleus. The protein localises to the golgi apparatus membrane. Functionally, functions as a key mediator in apoptosis and inflammation. Promotes caspase-mediated apoptosis involving predominantly caspase-8 and also caspase-9 in a probable cell type-specific manner. Involved in activation of the mitochondrial apoptotic pathway, promotes caspase-8-dependent proteolytic maturation of BID independently of FADD in certain cell types and also mediates mitochondrial translocation of BAX and activates BAX-dependent apoptosis coupled to activation of caspase-9, -2 and -3. Involved in innate immune response by acting as an integral adapter in the assembly of various inflammasomes (NLRP1, NLRP2, NLRP3, NLRP6, AIM2 and probably IFI16) which recruit and activate caspase-1 leading to processing and secretion of pro-inflammatory cytokines. Caspase-1-dependent inflammation leads to macrophage pyroptosis, a form of cell death. The function as activating adapter in different types of inflammasomes is mediated by the pyrin and CARD domains and their homotypic interactions. Clustered PYCARD nucleates the formation of caspase-1 filaments through the interaction of their respective CARD domains, acting as a platform for of caspase-1 polymerization. In the NLRP1 and NLRC4 inflammasomes seems not be required but facilitates the processing of procaspase-1. In cooperation with NOD2 involved in an inflammasome activated by bacterial muramyl dipeptide leading to caspase-1 activation. May be involved in RIGI-triggered pro-inflammatory responses and inflammasome activation. In collaboration with AIM2 which detects cytosolic double-stranded DNA may also be involved in a caspase-1-independent cell death that involves caspase-8. In adaptive immunity may be involved in maturation of dendritic cells to stimulate T-cell immunity and in cytoskeletal rearrangements coupled to chemotaxis and antigen uptake may be involved in post-transcriptional regulation of the guanine nucleotide exchange factor DOCK2; the latter function is proposed to involve the nuclear form. Also involved in transcriptional activation of cytokines and chemokines independent of the inflammasome; this function may involve AP-1, NF-kappa-B, MAPK and caspase-8 signaling pathways. For regulation of NF-kappa-B activating and inhibiting functions have been reported. Modulates NF-kappa-B induction at the level of the IKK complex by inhibiting kinase activity of CHUK and IKBK. Proposed to compete with RIPK2 for association with CASP1 thereby down-regulating CASP1-mediated RIPK2-dependent NF-kappa-B activation and activating interleukin-1 beta processing. Modulates host resistance to DNA virus infection, probably by inducing the cleavage of and inactivating CGAS in presence of cytoplasmic double-stranded DNA. Its function is as follows. May have a regulating effect on the function as inflammasome adapter. In terms of biological role, seems to inhibit inflammasome-mediated maturation of interleukin-1 beta. The polypeptide is Apoptosis-associated speck-like protein containing a CARD (Homo sapiens (Human)).